Reading from the N-terminus, the 273-residue chain is 4-hydroxy-tetrahydrodipicolinate reductase (273 aa).

NAD(+) contacts are provided by residues 12 to 17 and glutamate 38; that span reads GAGGRM. Arginine 39 is a binding site for NADP(+). Residues 102-104 and 126-129 each bind NAD(+); these read GTT and AANF. Histidine 159 serves as the catalytic Proton donor/acceptor. Histidine 160 contacts (S)-2,3,4,5-tetrahydrodipicolinate. Lysine 163 functions as the Proton donor in the catalytic mechanism. 169 to 170 is a binding site for (S)-2,3,4,5-tetrahydrodipicolinate; the sequence is GT.

It belongs to the DapB family. Homotetramer.

It is found in the cytoplasm. The catalysed reaction is (S)-2,3,4,5-tetrahydrodipicolinate + NAD(+) + H2O = (2S,4S)-4-hydroxy-2,3,4,5-tetrahydrodipicolinate + NADH + H(+). It catalyses the reaction (S)-2,3,4,5-tetrahydrodipicolinate + NADP(+) + H2O = (2S,4S)-4-hydroxy-2,3,4,5-tetrahydrodipicolinate + NADPH + H(+). The protein operates within amino-acid biosynthesis; L-lysine biosynthesis via DAP pathway; (S)-tetrahydrodipicolinate from L-aspartate: step 4/4. Functionally, catalyzes the conversion of 4-hydroxy-tetrahydrodipicolinate (HTPA) to tetrahydrodipicolinate. In Yersinia pestis bv. Antiqua (strain Antiqua), this protein is 4-hydroxy-tetrahydrodipicolinate reductase.